We begin with the raw amino-acid sequence, 320 residues long: Olfactory receptor 2T12 (320 aa).

The Extracellular segment spans residues 1-23; that stretch reads MEMRNTTPDFILLGLFNHTRAHQ. Asn17 carries N-linked (GlcNAc...) asparagine glycosylation. The helical transmembrane segment at 24-47 threads the bilayer; that stretch reads VLFMMLLATVLTSLFSNALMILLI. Residues 48–55 are Cytoplasmic-facing; that stretch reads HWDHRLHR. A helical membrane pass occupies residues 56 to 77; the sequence is PMYFLLSQLSLMDMMLVSTTVP. Residues 78-98 are Extracellular-facing; it reads KMAADYLTGNKAISRAGCGVQ. Cys95 and Cys187 are joined by a disulfide. Residues 99-118 traverse the membrane as a helical segment; sequence IFFLPTLGGGECFLLAAMAY. Residues 119–137 are Cytoplasmic-facing; the sequence is DRYAAVCHPLRYPTLMSWQ. Residues 138-156 form a helical membrane-spanning segment; sequence LCLRMTMSSWLLGAADGLL. The Extracellular portion of the chain corresponds to 157-193; the sequence is QAVATLSFPYCGAHEIDHFFCEAPVLVRLACADTSVF. The helical transmembrane segment at 194-217 threads the bilayer; that stretch reads ENAMYICCVLMLLVPFSLILSSYG. Topologically, residues 218–234 are cytoplasmic; the sequence is LILAAVLLMRSTEARKK. The helical transmembrane segment at 235 to 257 threads the bilayer; that stretch reads AFATCSSHVAVVGLFYGAGIFTY. Residues 258 to 270 lie on the Extracellular side of the membrane; it reads MRPKSHRSTNHDK. A helical membrane pass occupies residues 271 to 290; that stretch reads VVSAFYTMFTPLLNPLIYSV. Over 291-320 the chain is Cytoplasmic; it reads RNSEVKEALKRWLGTCVNLKHQQNEAHRSR.

The protein belongs to the G-protein coupled receptor 1 family.

Its subcellular location is the cell membrane. In terms of biological role, odorant receptor. The sequence is that of Olfactory receptor 2T12 (OR2T12) from Homo sapiens (Human).